A 263-amino-acid chain; its full sequence is Rhomboid-like protease 3 (263 aa).

The next 6 helical transmembrane spans lie at 37-57, 86-106, 121-141, 142-162, 189-209, and 231-251; these read KSIV…CVLS, VVTP…LVFI, KFLV…MLMQ, PWAL…GMAA, LIYF…GGFL, and VLFY…PPLL. Serine 150 serves as the catalytic Nucleophile. Histidine 204 is a catalytic residue.

This sequence belongs to the peptidase S54 family.

Its subcellular location is the membrane. It catalyses the reaction Cleaves type-1 transmembrane domains using a catalytic dyad composed of serine and histidine that are contributed by different transmembrane domains.. Functionally, serine protease involved in intramembrane proteolysis and the subsequent release of polypeptides from their membrane anchors. This is Rhomboid-like protease 3 (ROM3) from Toxoplasma gondii.